Consider the following 305-residue polypeptide: Homoserine O-acetyltransferase (305 aa).

The Acyl-thioester intermediate role is filled by C142. Residues K163 and S192 each contribute to the substrate site. H235 functions as the Proton acceptor in the catalytic mechanism. E237 is an active-site residue. A substrate-binding site is contributed by R249.

It belongs to the MetA family.

It is found in the cytoplasm. The enzyme catalyses L-homoserine + acetyl-CoA = O-acetyl-L-homoserine + CoA. Its pathway is amino-acid biosynthesis; L-methionine biosynthesis via de novo pathway; O-acetyl-L-homoserine from L-homoserine: step 1/1. Transfers an acetyl group from acetyl-CoA to L-homoserine, forming acetyl-L-homoserine. The chain is Homoserine O-acetyltransferase from Hyphomonas neptunium (strain ATCC 15444).